Reading from the N-terminus, the 309-residue chain is MIQSTGVTHTDKSAQENPVKYRDNFTPVIITGMSGAGLSTAARVLEDLGWYVAHNIPPQIILELIDMCAREDSPVDKVAVVCDVRSREFRGSLTQVVSELRDKQLDPTVLFLEARDEVLIKRFDNVRRTHPLQGSQTLQVGIERERTVLSPVKEDASVVIDTSDLSVHDLRRAIESSFRTIATRTQHVTIESFGFKHGSPRDADFVVDVRFLPNPFWVPELRPFRGVDKPVSDYVLSQKGAEEFLNNFVDMLKDMLPGYRHEGKNFITIGVGCTGGHHRSVAVSEELAKRIADQTTLDVSVVHRDINRH.

Residue 32-39 (GMSGAGLS) participates in ATP binding. 83–86 (DVRS) serves as a coordination point for GTP.

The protein belongs to the RapZ-like family.

Its function is as follows. Displays ATPase and GTPase activities. This Corynebacterium glutamicum (strain R) protein is Nucleotide-binding protein cgR_1639.